We begin with the raw amino-acid sequence, 248 residues long: Probable transcriptional regulatory protein LAR_0538 (248 aa).

The disordered stretch occupies residues 1–22 (MSGHSKWHNIQGRKNAQDAKRG).

The protein belongs to the TACO1 family.

It is found in the cytoplasm. The sequence is that of Probable transcriptional regulatory protein LAR_0538 from Limosilactobacillus reuteri subsp. reuteri (strain JCM 1112) (Lactobacillus reuteri).